The following is a 405-amino-acid chain: L-carnitine CoA-transferase (405 aa).

The CoA site is built by Lys97 and Arg104. The active-site Nucleophile is the Asp169.

It belongs to the CoA-transferase III family. CaiB subfamily. In terms of assembly, homodimer.

It is found in the cytoplasm. The catalysed reaction is crotonobetainyl-CoA + (R)-carnitine = crotonobetaine + (R)-carnitinyl-CoA. The enzyme catalyses 4-(trimethylamino)butanoyl-CoA + (R)-carnitine = (R)-carnitinyl-CoA + 4-(trimethylamino)butanoate. It participates in amine and polyamine metabolism; carnitine metabolism. Catalyzes the reversible transfer of the CoA moiety from gamma-butyrobetainyl-CoA to L-carnitine to generate L-carnitinyl-CoA and gamma-butyrobetaine. Is also able to catalyze the reversible transfer of the CoA moiety from gamma-butyrobetainyl-CoA or L-carnitinyl-CoA to crotonobetaine to generate crotonobetainyl-CoA. The chain is L-carnitine CoA-transferase from Salmonella choleraesuis (strain SC-B67).